The sequence spans 366 residues: ABI gene family member 3 (366 aa).

Positions 33 to 61 form a coiled coil; that stretch reads CEDNYVQATDKRKALEETMAFTTQALASV. Positions 161 to 195 are disordered; sequence SRTGTLSRKSIKAPATPASATLGRPPRIPEPVHLP. Phosphoserine occurs at positions 213 and 216. The segment at 215–302 is disordered; it reads GSAEGVGGAP…PPPGFGPDEP (88 aa). The span at 232 to 248 shows a compositional bias: pro residues; it reads PPAPPLPSSLDPPPPPA. In terms of domain architecture, SH3 spans 308-366; the sequence is SYLEKVVTLYPYTSQKDNELSFSEGTVICVTRRYSDGWCEGVSSEGTGFFPGNYVEPSC. Position 342 is a phosphoserine (Ser-342).

This sequence belongs to the ABI family. In terms of assembly, may interact with PAK1 and PAK2. Probably interacts with TARSH. In terms of tissue distribution, expressed in heart, lung, liver, pancreas, kidney, placenta and at low levels in brain and skeletal muscle.

It is found in the cytoplasm. Its function is as follows. May inhibit tumor metastasis. In vitro, reduces cell motility. The chain is ABI gene family member 3 (ABI3) from Homo sapiens (Human).